The chain runs to 441 residues: Rho-associated protein kinase 1 (441 aa).

Residues Asn-1 to Lys-99 are a coiled coil. Residues Glu-114–Ser-353 form an SHROOM3 binding region. The 67-residue stretch at Thr-356–Phe-422 folds into the RhoBD domain. Residues Asn-418–Lys-441 adopt a coiled-coil conformation.

It belongs to the protein kinase superfamily. AGC Ser/Thr protein kinase family. Homodimer. Interacts with RHOA (activated by GTP), RHOB, RHOC, GEM, MYLC2B, RHOE, PPP1R12A, LIMK1, LIMK2, TSG101, CHORDC1, DAPK3, PFN1, PTEN and JIP3. Interacts with FHOD1 in a Src-dependent manner. Interacts with ITGB1BP1 (via N-terminus and PTB domain). Interacts with SHROOM3. Mg(2+) is required as a cofactor.

It localises to the cytoplasm. The protein resides in the golgi apparatus membrane. Its subcellular location is the cytoskeleton. The protein localises to the microtubule organizing center. It is found in the centrosome. It localises to the centriole. The protein resides in the cell projection. Its subcellular location is the bleb. The protein localises to the cell membrane. It is found in the lamellipodium. It localises to the ruffle. The enzyme catalyses L-seryl-[protein] + ATP = O-phospho-L-seryl-[protein] + ADP + H(+). It catalyses the reaction L-threonyl-[protein] + ATP = O-phospho-L-threonyl-[protein] + ADP + H(+). With respect to regulation, activated by RHOA binding. Inhibited by Y-27632. Functionally, protein kinase which is a key regulator of the actin cytoskeleton and cell polarity. Involved in regulation of smooth muscle contraction, actin cytoskeleton organization, stress fiber and focal adhesion formation, neurite retraction, cell adhesion and motility via phosphorylation of DAPK3, GFAP, LIMK1, LIMK2, MYL9/MLC2, TPPP, PFN1 and PPP1R12A. Phosphorylates FHOD1 and acts synergistically with it to promote SRC-dependent non-apoptotic plasma membrane blebbing. Phosphorylates JIP3 and regulates the recruitment of JNK to JIP3 upon UVB-induced stress. Acts as a suppressor of inflammatory cell migration by regulating PTEN phosphorylation and stability. Acts as a negative regulator of VEGF-induced angiogenic endothelial cell activation. Required for centrosome positioning and centrosome-dependent exit from mitosis. Plays a role in terminal erythroid differentiation. Inhibits podocyte motility via regulation of actin cytoskeletal dynamics and phosphorylation of CFL1. Promotes keratinocyte terminal differentiation. Involved in osteoblast compaction through the fibronectin fibrillogenesis cell-mediated matrix assembly process, essential for osteoblast mineralization. May regulate closure of the eyelids and ventral body wall by inducing the assembly of actomyosin bundles. This Bos taurus (Bovine) protein is Rho-associated protein kinase 1 (ROCK1).